Reading from the N-terminus, the 1065-residue chain is NLR family CARD domain-containing protein 3 (1065 aa).

Residues 1–10 are compositionally biased toward basic and acidic residues; the sequence is MRKQEVRTGR. Residues 1–62 form a disordered region; it reads MRKQEVRTGR…PLGPCSNDSR (62 aa). An NACHT domain is found at 139-460; sequence RVSITIGVAG…YCFTHLSLQE (322 aa). Residue 145-152 participates in ATP binding; sequence GVAGMGKT. Residues 457 to 460 carry the TRAF6-binding motif; the sequence is SLQE. 16 LRR repeats span residues 617–639, 641–663, 665–688, 693–716, 721–744, 749–772, 777–800, 805–828, 833–856, 861–884, 889–912, 917–940, 945–968, 973–996, 1001–1029, and 1031–1052; these read EANL…LLYC, KLRL…VLSG, DCRI…ALAR, NRSL…ALAD, NRTL…SMAE, NRTL…RMAD, NRSL…ALAE, NQGL…ALMG, NQTL…AIAH, NSTL…AIAV, NRTL…ALGQ, NRSL…AVAR, NTAL…VLGE, NRTL…ALAN, NSSL…LSGN, and RLQH…MISE.

The protein belongs to the NLRP family. Directly interacts (via CARD) with TMEM173/STING; this interaction reduces TMEM173 trafficking to the perinuclear region in response to interferon stimulatory DNA. Also interacts, but to a lesser extent, with TBK1. Interacts with TRAF6; this interaction results in decreased TRAF6 'Lys-63'-linked polyubiquitination, but leaves 'Lys-48'-linked chains unchanged, promoting TRAF6 protein degradation. Interacts with PIK3R1/PIK3R2; this interaction disrupts the association between PIK3R1/PIK3R2 and the p110 catalytic subunit PIK3CA/PIK3CB/PIK3CD and reduces PIK3R1/PIK3R2 activation. Weakly interacts with PYCARD/ASC. Interacts with CASP1 and CASP5.

It is found in the cytoplasm. Its function is as follows. Negative regulator of the innate immune response. Attenuates signaling pathways activated by Toll-like receptors (TLRs) and the DNA sensor STING/TMEM173 in response to pathogen-associated molecular patterns, such as intracellular poly(dA:dT), but not poly(I:C), or in response to DNA virus infection, including that of Herpes simplex virus 1 (HSV1). May affect TLR4 signaling by acting at the level of TRAF6 ubiquitination, decreasing the activating 'Lys-63'-linked ubiquitination and leaving unchanged the degradative 'Lys-48'-linked ubiquitination. Inhibits the PI3K-AKT-mTOR pathway possibly by directly interacting with the posphatidylinositol 3-kinase regulatory subunit p85 (PIK3R1/PIK3R2) and disrupting the association between PIK3R1/PIK3R2 and the catalytic subunit p110 (PIK3CA/PIK3CB/PIK3CD) and reducing PIK3R1/PIK3R2 activation. Via its regulation of the PI3K-AKT-mTOR pathway, controls cell proliferation, predominantly in intestinal epithelial cells. May also affect NOD1- or NOD2-mediated NF-kappa-B activation. Might also affect the inflammatory response by preventing NLRP3 inflammasome formation, CASP1 cleavage and IL1B maturation. The chain is NLR family CARD domain-containing protein 3 (NLRC3) from Homo sapiens (Human).